The chain runs to 250 residues: Putative inactive flavonol synthase 2 (250 aa).

The region spanning 171–250 is the Fe2OG dioxygenase domain; that stretch reads TEYVMRINNY…EQWKVQECVA (80 aa). Fe cation is bound by residues His-195 and Asp-197.

The protein belongs to the iron/ascorbate-dependent oxidoreductase family.

This chain is Putative inactive flavonol synthase 2 (FLS2), found in Arabidopsis thaliana (Mouse-ear cress).